A 246-amino-acid chain; its full sequence is 1-(5-phosphoribosyl)-5-[(5-phosphoribosylamino)methylideneamino] imidazole-4-carboxamide isomerase (246 aa).

The Proton acceptor role is filled by Asp-12. Residue Asp-134 is the Proton donor of the active site.

The protein belongs to the HisA/HisF family.

The protein resides in the cytoplasm. The catalysed reaction is 1-(5-phospho-beta-D-ribosyl)-5-[(5-phospho-beta-D-ribosylamino)methylideneamino]imidazole-4-carboxamide = 5-[(5-phospho-1-deoxy-D-ribulos-1-ylimino)methylamino]-1-(5-phospho-beta-D-ribosyl)imidazole-4-carboxamide. The protein operates within amino-acid biosynthesis; L-histidine biosynthesis; L-histidine from 5-phospho-alpha-D-ribose 1-diphosphate: step 4/9. The sequence is that of 1-(5-phosphoribosyl)-5-[(5-phosphoribosylamino)methylideneamino] imidazole-4-carboxamide isomerase from Haloarcula marismortui (strain ATCC 43049 / DSM 3752 / JCM 8966 / VKM B-1809) (Halobacterium marismortui).